The chain runs to 503 residues: Cytochrome P450 3A8 (503 aa).

Residue Cys-442 coordinates heme.

This sequence belongs to the cytochrome P450 family. Heme is required as a cofactor.

It is found in the endoplasmic reticulum membrane. The protein resides in the microsome membrane. The catalysed reaction is an organic molecule + reduced [NADPH--hemoprotein reductase] + O2 = an alcohol + oxidized [NADPH--hemoprotein reductase] + H2O + H(+). In terms of biological role, catalyzes nifedipine and nilvadipine oxidations. This is Cytochrome P450 3A8 (CYP3A8) from Macaca fascicularis (Crab-eating macaque).